A 787-amino-acid chain; its full sequence is Putative pentatricopeptide repeat-containing protein At1g69350, mitochondrial (787 aa).

The transit peptide at M1–L16 directs the protein to the mitochondrion. 19 PPR repeats span residues D33–P63, D64–I98, S99–D134, D135–R165, D166–P200, D201–L235, D236–K266, N267–P301, N302–P336, Y338–R368, N369–P403, D404–T434, D438–R468, S469–M503, N504–S534, D538–R568, S569–P603, N604–P638, and N639–L669. The interval V674–D749 is type E motif. The interval Q750–N780 is type E(+) motif.

The protein belongs to the PPR family. PCMP-E subfamily.

The protein localises to the mitochondrion. This chain is Putative pentatricopeptide repeat-containing protein At1g69350, mitochondrial (PCMP-E66), found in Arabidopsis thaliana (Mouse-ear cress).